The following is a 189-amino-acid chain: Elongation factor P (189 aa).

This sequence belongs to the elongation factor P family.

The protein resides in the cytoplasm. It functions in the pathway protein biosynthesis; polypeptide chain elongation. Involved in peptide bond synthesis. Stimulates efficient translation and peptide-bond synthesis on native or reconstituted 70S ribosomes in vitro. Probably functions indirectly by altering the affinity of the ribosome for aminoacyl-tRNA, thus increasing their reactivity as acceptors for peptidyl transferase. The chain is Elongation factor P from Pseudomonas syringae pv. syringae (strain B728a).